The sequence spans 353 residues: Divinyl chlorophyll a/b light-harvesting protein PcbG (353 aa).

6 consecutive transmembrane segments (helical) span residues 28-48, 64-84, 90-110, 204-224, 244-264, and 308-328; these read FISSHIAHTGLICFGAGANTL, GLVVLPHLAGLGLGGISNGVF, LLVVAILHLILSGVYGGGGML, IMGGHAFLAFFMAAGGVFHIL, FVLSTSLAGAAYTAFVAALWC, and LTNVHFFIGFFYLQGHFFHGL.

Belongs to the PsbB/PsbC family. IsiA/Pcb subfamily. As to quaternary structure, the antenna complex consists of divinyl chlorophylls (a and b) and divinyl chlorophyll a/b binding proteins and binds more divinyl chlorophyll b than does the antenna complex from high-light-adapted Prochlorococcus. Also forms complexes with PSI, consisting of a PSI trimer with surrounded by a PcbG ring (probably with 18 subunits). Is the only subunit found in this ring under iron-replete conditions. Requires divinyl chlorophyll a as cofactor. Divinyl chlorophyll b serves as cofactor.

The protein localises to the cellular thylakoid membrane. Its function is as follows. The antenna complex functions as a light receptor, it captures and delivers excitation energy to photosystems I. The Prochlorales pcb genes are not related to higher plant LHCs. The sequence is that of Divinyl chlorophyll a/b light-harvesting protein PcbG (pcbG) from Prochlorococcus marinus (strain SARG / CCMP1375 / SS120).